Reading from the N-terminus, the 124-residue chain is Putative melanoma-associated antigen 5P (124 aa).

Residues 1–14 (MSLEQKSQHCKPEE) show a composition bias toward basic and acidic residues. Disordered stretches follow at residues 1 to 69 (MSLE…QGAS) and 82 to 103 (QSIK…DPES). The MAGE domain maps to 3–124 (LEQKSQHCKP…DLIHFLLLKY (122 aa)). Polar residues-rich tracts occupy residues 30–44 (AATT…SSSP) and 82–100 (QSIK…TSPD).

Expressed in many tumors of several types, such as melanoma, head and neck squamous cell carcinoma, lung carcinoma and breast carcinoma, but not in normal tissues except for testes.

Functionally, may negatively regulates apoptosis. This is Putative melanoma-associated antigen 5P from Homo sapiens (Human).